Here is a 268-residue protein sequence, read N- to C-terminus: Uronate dehydrogenase (268 aa).

NAD(+)-binding positions include 17 to 18 (GL), 37 to 39 (DIS), 55 to 56 (DL), and 75 to 79 (FGGVS). Residues Ser79 and 115–117 (SNH) each bind substrate. Tyr140 (proton acceptor) is an active-site residue. NAD(+) is bound at residue Lys144. Ser169 serves as a coordination point for substrate. Ser170 contacts NAD(+). A substrate-binding site is contributed by Arg178.

Belongs to the NAD(P)-dependent epimerase/dehydratase family. As to quaternary structure, homohexamer.

The catalysed reaction is beta-D-galacturonate + NAD(+) = D-galactaro-1,5-lactone + NADH + H(+). The enzyme catalyses beta-D-glucuronate + NAD(+) = D-glucaro-1,5-lactone + NADH + H(+). Its pathway is carbohydrate acid metabolism; D-galacturonate degradation via prokaryotic oxidative pathway. In terms of biological role, catalyzes the oxidation of beta-D-galacturonate and beta-D-glucuronate to galactarate and D-glucarate, respectively. In Pseudomonas putida (strain ATCC 47054 / DSM 6125 / CFBP 8728 / NCIMB 11950 / KT2440), this protein is Uronate dehydrogenase (udh).